We begin with the raw amino-acid sequence, 196 residues long: MKSIEVKGTARTIAERSSEQARALKEIRKNGGVPCVLYGAGEVVHFTVTNEGLRNLVYTPHIYVVDLDIDGKKVNAILKDIQFHPVKDNILHVDFYQIDEAKPIVMEVPVQLEGLAEGVKAGGKLALQMRKIKVKALYNVIPEKLTVNVSHLGLGKTVKVGELSFEGLELISAKEAVVCAVKLTRAARGAAAAAGK.

Belongs to the bacterial ribosomal protein bL25 family. CTC subfamily. As to quaternary structure, part of the 50S ribosomal subunit; part of the 5S rRNA/L5/L18/L25 subcomplex. Contacts the 5S rRNA. Binds to the 5S rRNA independently of L5 and L18.

In terms of biological role, this is one of the proteins that binds to the 5S RNA in the ribosome where it forms part of the central protuberance. The polypeptide is Large ribosomal subunit protein bL25 (Bacteroides thetaiotaomicron (strain ATCC 29148 / DSM 2079 / JCM 5827 / CCUG 10774 / NCTC 10582 / VPI-5482 / E50)).